A 373-amino-acid chain; its full sequence is Protein translocase subunit SecF (373 aa).

6 helical membrane-spanning segments follow: residues 26 to 46 (IWYG…AVRG), 142 to 162 (WQGL…AFEW), 166 to 186 (LAAF…YALV), 193 to 213 (GTVI…VVVF), 251 to 271 (VVAL…LGAG), and 280 to 300 (LFVG…PLVA). A compositionally biased stretch (low complexity) spans 322–332 (QGAAKGESAES). A disordered region spans residues 322–373 (QGAAKGESAESAADEGAYDADEPDDAAPAVVGPRNQPASRGRGRGRPSGKRR). Residues 333-346 (AADEGAYDADEPDD) are compositionally biased toward acidic residues. The segment covering 362-373 (GRGRGRPSGKRR) has biased composition (basic residues).

The protein belongs to the SecD/SecF family. SecF subfamily. Forms a complex with SecD. Part of the essential Sec protein translocation apparatus which comprises SecA, SecYEG and auxiliary proteins SecDF. Other proteins may also be involved.

It is found in the cell membrane. Part of the Sec protein translocase complex. Interacts with the SecYEG preprotein conducting channel. SecDF uses the proton motive force (PMF) to complete protein translocation after the ATP-dependent function of SecA. The polypeptide is Protein translocase subunit SecF (Streptomyces coelicolor (strain ATCC BAA-471 / A3(2) / M145)).